Reading from the N-terminus, the 198-residue chain is Probable GTP-binding protein EngB (198 aa).

Positions 22–195 constitute an EngB-type G domain; the sequence is NRNEVAFVGR…IDKLFLEFAT (174 aa). GTP-binding positions include 30–37, 57–61, 75–78, 142–145, and 174–176; these read GRSNVGKS, GKTRL, DLPG, TKSD, and YSS. The Mg(2+) site is built by serine 37 and threonine 59.

This sequence belongs to the TRAFAC class TrmE-Era-EngA-EngB-Septin-like GTPase superfamily. EngB GTPase family. Mg(2+) is required as a cofactor.

In terms of biological role, necessary for normal cell division and for the maintenance of normal septation. The protein is Probable GTP-binding protein EngB of Clostridium botulinum (strain Alaska E43 / Type E3).